A 400-amino-acid chain; its full sequence is S-adenosylmethionine synthase (400 aa).

His-17 provides a ligand contact to ATP. A Mg(2+)-binding site is contributed by Asp-19. Glu-45 contacts K(+). L-methionine is bound by residues Glu-58 and Gln-101. The flexible loop stretch occupies residues 101–111 (QSADIAMGVDQ). Residues 177-179 (DGK), 244-245 (RF), Asp-253, 259-260 (RK), Ala-276, and Lys-280 contribute to the ATP site. An L-methionine-binding site is contributed by Asp-253. An L-methionine-binding site is contributed by Lys-284.

The protein belongs to the AdoMet synthase family. Homotetramer; dimer of dimers. Mg(2+) serves as cofactor. It depends on K(+) as a cofactor.

It is found in the cytoplasm. It catalyses the reaction L-methionine + ATP + H2O = S-adenosyl-L-methionine + phosphate + diphosphate. It participates in amino-acid biosynthesis; S-adenosyl-L-methionine biosynthesis; S-adenosyl-L-methionine from L-methionine: step 1/1. Functionally, catalyzes the formation of S-adenosylmethionine (AdoMet) from methionine and ATP. The overall synthetic reaction is composed of two sequential steps, AdoMet formation and the subsequent tripolyphosphate hydrolysis which occurs prior to release of AdoMet from the enzyme. This Bacillus velezensis (strain DSM 23117 / BGSC 10A6 / LMG 26770 / FZB42) (Bacillus amyloliquefaciens subsp. plantarum) protein is S-adenosylmethionine synthase.